Here is a 501-residue protein sequence, read N- to C-terminus: Raftlin-2 (501 aa).

2 disordered regions span residues 1–20 (MGCGLRKLEDPDDSSPGKIF) and 196–239 (SWNE…RKGE). The N-myristoyl glycine moiety is linked to residue G2. Residue C3 is the site of S-palmitoyl cysteine attachment. Positions 220–233 (GQYQMEQNGSPTSS) are enriched in polar residues. S405 is modified (phosphoserine). Residues 407 to 449 (AQTPDKKASRHIKGEDKNKATSRSIGLDTTSSQPAESRHLPEE) are disordered. T409 carries the phosphothreonine modification. A compositionally biased stretch (basic and acidic residues) spans 410–425 (PDKKASRHIKGEDKNK). Over residues 427 to 441 (TSRSIGLDTTSSQPA) the composition is skewed to polar residues. The residue at position 430 (S430) is a Phosphoserine.

This sequence belongs to the raftlin family.

It localises to the cell membrane. In terms of biological role, upon bacterial lipopolysaccharide stimulation, mediates clathrin-dependent internalization of TLR4 in dendritic cells, resulting in activation of TICAM1-mediated signaling and subsequent IFNB1 production. May regulate B-cell antigen receptor-mediated signaling. This Homo sapiens (Human) protein is Raftlin-2 (RFTN2).